Consider the following 355-residue polypeptide: SH3 domain-containing protein Dlish (355 aa).

3 consecutive SH3 domains span residues 57 to 117 (SPDS…PCNT), 183 to 243 (EPSG…PADS), and 287 to 352 (YHGT…PPAM).

Interacts with dachs (via C-terminus); the interaction is direct. Interacts (via N-terminus including SH3 domain 1) with palmitoyltransferase app; this leads to palmitoylation of Dlish by app. Also interacts with dco, ft, ft-regulated E3 ubiquitin ligase Fbxl7, F-box protein slmb and SCF E3 ubiquitin-protein ligase complex component Cul1. Post-translationally, palmitoylated by app.

It is found in the cytoplasm. The protein localises to the cell cortex. In terms of biological role, required for the apical cell cortex localization, total cellular level and full activity of dachs. This chain is SH3 domain-containing protein Dlish, found in Drosophila melanogaster (Fruit fly).